A 544-amino-acid chain; its full sequence is Chaperonin GroEL (544 aa).

ATP is bound by residues 29–32 (TLGP), 86–90 (DGTTT), G413, 476–478 (NAA), and D492.

It belongs to the chaperonin (HSP60) family. As to quaternary structure, forms a cylinder of 14 subunits composed of two heptameric rings stacked back-to-back. Interacts with the co-chaperonin GroES.

It is found in the cytoplasm. It carries out the reaction ATP + H2O + a folded polypeptide = ADP + phosphate + an unfolded polypeptide.. Functionally, together with its co-chaperonin GroES, plays an essential role in assisting protein folding. The GroEL-GroES system forms a nano-cage that allows encapsulation of the non-native substrate proteins and provides a physical environment optimized to promote and accelerate protein folding. The sequence is that of Chaperonin GroEL from Bacillus velezensis (strain DSM 23117 / BGSC 10A6 / LMG 26770 / FZB42) (Bacillus amyloliquefaciens subsp. plantarum).